Consider the following 174-residue polypeptide: NADH-quinone oxidoreductase subunit C (174 aa).

It belongs to the complex I 30 kDa subunit family. NDH-1 is composed of 14 different subunits. Subunits NuoB, C, D, E, F, and G constitute the peripheral sector of the complex.

The protein localises to the cell membrane. It carries out the reaction a quinone + NADH + 5 H(+)(in) = a quinol + NAD(+) + 4 H(+)(out). Its function is as follows. NDH-1 shuttles electrons from NADH, via FMN and iron-sulfur (Fe-S) centers, to quinones in the respiratory chain. The immediate electron acceptor for the enzyme in this species is believed to be ubiquinone. Couples the redox reaction to proton translocation (for every two electrons transferred, four hydrogen ions are translocated across the cytoplasmic membrane), and thus conserves the redox energy in a proton gradient. This Roseiflexus sp. (strain RS-1) protein is NADH-quinone oxidoreductase subunit C.